The chain runs to 423 residues: Cop9 signalosome complex subunit 12 (423 aa).

A PCI domain is found at 232–418 (GFFHLNEALL…RCIVFSKKEP (187 aa)).

The protein belongs to the CSN12 family. As to quaternary structure, component of a COP9 signalosome-like (CSN) complex, composed of RRI1/CSN5, CSN9, RRI2/CSN10, PCI8/CSN11, CSN12 and CSI1. In the complex, it probably interacts directly with RRI1/CSN5, CSN9, RRI2/CSN10 and CSI1. Interacts with SEM1 and THP3.

The protein resides in the cytoplasm. It localises to the nucleus. Functionally, component of the COP9 signalosome (CSN) complex that acts as an regulator of the ubiquitin (Ubl) conjugation pathway by mediating the deneddylation of the cullin subunit of SCF-type E3 ubiquitin-protein ligase complexes. The CSN complex is involved in the regulation of the mating pheromone response. CSN12 forms a complex with THP3 that is recruited to transcribed genes and required for transcription elongation. The sequence is that of Cop9 signalosome complex subunit 12 (CSN12) from Saccharomyces cerevisiae (strain ATCC 204508 / S288c) (Baker's yeast).